The sequence spans 254 residues: 3-deoxy-manno-octulosonate cytidylyltransferase (254 aa).

The protein belongs to the KdsB family.

The protein localises to the cytoplasm. The catalysed reaction is 3-deoxy-alpha-D-manno-oct-2-ulosonate + CTP = CMP-3-deoxy-beta-D-manno-octulosonate + diphosphate. It functions in the pathway nucleotide-sugar biosynthesis; CMP-3-deoxy-D-manno-octulosonate biosynthesis; CMP-3-deoxy-D-manno-octulosonate from 3-deoxy-D-manno-octulosonate and CTP: step 1/1. It participates in bacterial outer membrane biogenesis; lipopolysaccharide biosynthesis. Activates KDO (a required 8-carbon sugar) for incorporation into bacterial lipopolysaccharide in Gram-negative bacteria. The sequence is that of 3-deoxy-manno-octulosonate cytidylyltransferase from Polynucleobacter asymbioticus (strain DSM 18221 / CIP 109841 / QLW-P1DMWA-1) (Polynucleobacter necessarius subsp. asymbioticus).